A 313-amino-acid polypeptide reads, in one-letter code: Mitochondrial uncoupling protein 5 (313 aa).

Solcar repeat units follow at residues 4 to 108 (KGFA…IKGE), 117 to 208 (MPLM…VKET), and 217 to 307 (DGLG…VKKL). The next 6 helical transmembrane spans lie at 6–26 (FAEG…LDLI), 77–97 (MRAL…YSTT), 123–143 (IGAG…ADVA), 182–202 (RGSS…LASY), 223–243 (VSAS…VDVI), and 280–300 (YKGF…LFVT).

It belongs to the mitochondrial carrier (TC 2.A.29) family. Expressed in roots, leaves, stems and flowers.

It is found in the mitochondrion inner membrane. In terms of biological role, PUMPS are mitochondrial transporter proteins that create proton leaks across the inner mitochondrial membrane, thus uncoupling oxidative phosphorylation. This leads to a decrease in the efficiency of oxidative phosphorylation and an increase in heat production. May be involved in protecting plant cells against oxidative stress damage. Recombinant PUMP5, reconstituted into liposomes, transports a wide range of dicarboxylic acids including malate, oxaloacetate and succinate as well as phosphate, sulfate and thiosulfate. However, it is unknown if these transports are of any biological significance in vivo. The chain is Mitochondrial uncoupling protein 5 (PUMP5) from Arabidopsis thaliana (Mouse-ear cress).